A 139-amino-acid chain; its full sequence is GSK3B-interacting protein (139 aa).

Positions 41-45 (VNDVL) are required for PRKAR2A interaction; contributes to a protective effect against H(2)O(2)-induced apoptosis. Residues 115–139 (SPAYREAFGNALLQRLEALKRDGQS) form an interaction with GSK3B and acts as a GSK3B inhibitor region.

It belongs to the GSKIP family. In terms of assembly, forms a complex composed of PRKAR2A or PRKAR2B, GSK3B and GSKIP through GSKIP interaction; facilitates PKA-induced phosphorylation of GSK3B leading to GSK3B inactivation; recruits DNM1L through GSK3B for PKA-mediated phosphorylation of DNM1L; promotes beta-catenin degradation through GSK3B-induced phosphorylation of beta-catenin; stabilizes beta-catenin and enhances Wnt-induced signaling through PKA-induced phosphorylation of beta-catenin. Interacts with GSK3B; induces GSK3B-mediated phosphorylation of GSKIP and inhibits GSK3B kinase activity. In terms of processing, phosphorylated by GSK3B.

Its subcellular location is the cytoplasm. It is found in the nucleus. Functionally, A-kinase anchoring protein for GSK3B and PKA that regulates or facilitates their kinase activity towards their targets. The ternary complex enhances Wnt-induced signaling by facilitating the GSK3B- and PKA-induced phosphorylation of beta-catenin leading to beta-catenin degradation and stabilization respectively. Upon cAMP activation, the ternary complex contributes to neuroprotection against oxidative stress-induced apoptosis by facilitating the PKA-induced phosphorylation of DML1 and PKA-induced inactivation of GSK3B. During neurite outgrowth promotes neuron proliferation; while increases beta-catenin-induced transcriptional activity through GSK3B kinase activity inhibition, reduces N-cadherin level to promote cell cycle progression. May play a role in cleft palate formation and is required for postnatal life through modulation of the activity of GSK3B during development. This is GSK3B-interacting protein from Mus musculus (Mouse).